The following is a 271-amino-acid chain: Inactive phospholipid phosphatase 7 (271 aa).

Residues 1-66 are disordered; that stretch reads MPASQSRARA…RERRQSQQLP (66 aa). At 1-112 the chain is on the cytoplasmic side; sequence MPASQSRARA…AASWASARSM (112 aa). A phosphoserine mark is found at Ser43 and Ser62. Residues 70-91 form an interaction with MTOR region; sequence CMQLNPSFKGIAFNSLLAIDIC. A helical membrane pass occupies residues 113–133; the sequence is VKLIGITGHGIPWIGGTILCL. Over 134–141 the chain is Extracellular; it reads VKSSTLAG. Residues 142–162 form a helical membrane-spanning segment; that stretch reads QEVLMNLLLALLLDIMTVAGV. The Cytoplasmic portion of the chain corresponds to 163 to 202; it reads QKLIKRRGPYETSPSLLDYLTMDIYAFPAGHASRAAMVSK. A helical membrane pass occupies residues 203 to 223; sequence FFLSHLVLAVPLRVLLVLWAL. Residues 224–239 are Extracellular-facing; it reads CVGLSRVMIGRHHVTD. A helical transmembrane segment spans residues 240–260; sequence VLSGFVIGYLQFRLVELVWMP. At 261-271 the chain is on the cytoplasmic side; the sequence is SSTCQMLISAW.

Belongs to the PA-phosphatase related phosphoesterase family. As to quaternary structure, homo and heterooligomer. Interacts with MTOR; controls MTOR-dependent IGF2 expression during myoblast differentiation.

It is found in the nucleus envelope. Its subcellular location is the endoplasmic reticulum membrane. The protein localises to the membrane. Plays a role as negative regulator of myoblast differentiation, in part through effects on MTOR signaling. Has no detectable enzymatic activity. This Homo sapiens (Human) protein is Inactive phospholipid phosphatase 7.